The primary structure comprises 638 residues: Exotoxin A (638 aa).

The N-terminal stretch at 1 to 25 is a signal peptide; that stretch reads MHLTPHWIPLVASLGLLAGGSFASA. The tract at residues 26–277 is domain Ia (required for target cell recognition); it reads AEEAFDLWNE…VISHRLHFPE (252 aa). Positions 278–389 are II (required for translocation in target cell cytoplasm); sequence GGSLAALTAH…TGNDEAGAAS (112 aa). The cysteines at positions 290 and 312 are disulfide-linked. The domain Ib stretch occupies residues 390–429; sequence ADVVSLTCPVAAGECAGPADSGDALLERNYPTGAEFLGDG. The tract at residues 430 to 638 is III (required for ADP-ribosyl activity); that stretch reads GDISFSTRGT…PGKPPREDLK (209 aa). Residues 465–467, Ser-474, 479–485, and Glu-578 each bind NAD(+); these read HGT and GVRARSQ. The active site involves Glu-578. Residues 596-638 form a disordered region; the sequence is IPTDPRNVGGDLDPSSIPDKEQAISALPDYASQPGKPPREDLK.

In terms of processing, the 8 cysteines participate in intrachain disulfide bonds.

It catalyses the reaction diphthamide-[translation elongation factor 2] + NAD(+) = N-(ADP-D-ribosyl)diphthamide-[translation elongation factor 2] + nicotinamide + H(+). Its activity is regulated as follows. Inhibited by 1,8-naphthalimide (NAP) as well as a number of poly(ADP-ribose) polymerase inhibitors and other compounds. An NAD-dependent ADP-ribosyltransferase (ADPRT). Catalyzes the transfer of the ADP ribosyl moiety of oxidized NAD (NAD(+)) onto eukaryotic elongation factor 2 (eEF-2) thus arresting protein synthesis. Has an LD(50) of 65 ng/ml against the human lung epithelial cell line C38. This chain is Exotoxin A, found in Pseudomonas aeruginosa (strain ATCC 15692 / DSM 22644 / CIP 104116 / JCM 14847 / LMG 12228 / 1C / PRS 101 / PAO1).